Consider the following 133-residue polypeptide: Male-specific protein scotti (133 aa).

The disordered stretch occupies residues 11 to 57; that stretch reads FPSNGLGNNNNDPNQQRGERPRQPHPDLGWILDAPNEPPRNRNPLLY. Positions 14–24 are enriched in low complexity; it reads NGLGNNNNDPN. N-linked (GlcNAc...) asparagine glycosylation is present at Asn83.

The protein belongs to the male-specific scotti family.

Post-meiotically transcribed gene that has a role in late spermiogenesis; required for actin cone progression during spermatid individualization. This is Male-specific protein scotti from Drosophila persimilis (Fruit fly).